The sequence spans 314 residues: Ribosomal protein L11 methyltransferase (314 aa).

Residues threonine 161, glycine 182, aspartate 204, and asparagine 248 each coordinate S-adenosyl-L-methionine.

The protein belongs to the methyltransferase superfamily. PrmA family.

The protein localises to the cytoplasm. The enzyme catalyses L-lysyl-[protein] + 3 S-adenosyl-L-methionine = N(6),N(6),N(6)-trimethyl-L-lysyl-[protein] + 3 S-adenosyl-L-homocysteine + 3 H(+). In terms of biological role, methylates ribosomal protein L11. The chain is Ribosomal protein L11 methyltransferase from Listeria welshimeri serovar 6b (strain ATCC 35897 / DSM 20650 / CCUG 15529 / CIP 8149 / NCTC 11857 / SLCC 5334 / V8).